We begin with the raw amino-acid sequence, 541 residues long: Ankyrin repeat domain-containing protein 13C (541 aa).

The span at 1-20 shows a compositional bias: basic and acidic residues; sequence MTGEKIRSLRRDHKPSKEDG. Residues 1–53 form a disordered region; the sequence is MTGEKIRSLRRDHKPSKEDGDVLEPCEEEATAALGGAFTGGRSGPGGSGKGGK. Acidic residues predominate over residues 21–30; the sequence is DVLEPCEEEA. Positions 37 to 52 are enriched in gly residues; it reads AFTGGRSGPGGSGKGG. ANK repeat units lie at residues 111–142, 143–172, and 176–205; these read PSLY…QKDN, HGNT…PVKV, and QGWS…QQSR. Ser411 bears the Phosphoserine mark.

It localises to the endoplasmic reticulum membrane. In terms of biological role, acts as a molecular chaperone for G protein-coupled receptors, regulating their biogenesis and exit from the ER. The chain is Ankyrin repeat domain-containing protein 13C (Ankrd13c) from Mus musculus (Mouse).